A 285-amino-acid chain; its full sequence is Glutamate racemase (285 aa).

Substrate-binding positions include 30-31 (DS) and 62-63 (YG). Cys-94 (proton donor/acceptor) is an active-site residue. Residue 95–96 (NT) coordinates substrate. The active-site Proton donor/acceptor is Cys-206. 207 to 208 (TH) lines the substrate pocket.

The protein belongs to the aspartate/glutamate racemases family.

It carries out the reaction L-glutamate = D-glutamate. The protein operates within cell wall biogenesis; peptidoglycan biosynthesis. Its function is as follows. Provides the (R)-glutamate required for cell wall biosynthesis. The chain is Glutamate racemase from Pectobacterium atrosepticum (strain SCRI 1043 / ATCC BAA-672) (Erwinia carotovora subsp. atroseptica).